A 147-amino-acid chain; its full sequence is Hemoglobin subunit beta (147 aa).

The Globin domain occupies 3-147; it reads NWTKTEKATI…VMSALGKQYH (145 aa). Heme b contacts are provided by histidine 64 and histidine 93.

This sequence belongs to the globin family. As to quaternary structure, heterotetramer of two alpha chains and two beta chains. As to expression, red blood cells.

Functionally, involved in oxygen transport from gills to the various peripheral tissues. In Gymnodraco acuticeps (Antarctic dragonfish), this protein is Hemoglobin subunit beta (hbb).